A 137-amino-acid chain; its full sequence is Large ribosomal subunit protein uL16 (137 aa).

The protein belongs to the universal ribosomal protein uL16 family. Part of the 50S ribosomal subunit.

Its function is as follows. Binds 23S rRNA and is also seen to make contacts with the A and possibly P site tRNAs. The chain is Large ribosomal subunit protein uL16 from Cellvibrio japonicus (strain Ueda107) (Pseudomonas fluorescens subsp. cellulosa).